The following is a 213-amino-acid chain: Ribosomal RNA small subunit methyltransferase G (213 aa).

S-adenosyl-L-methionine contacts are provided by residues Gly-75, Phe-80, Ile-128–Glu-129, and Arg-144.

It belongs to the methyltransferase superfamily. RNA methyltransferase RsmG family.

The protein resides in the cytoplasm. It carries out the reaction guanosine(527) in 16S rRNA + S-adenosyl-L-methionine = N(7)-methylguanosine(527) in 16S rRNA + S-adenosyl-L-homocysteine. In terms of biological role, specifically methylates the N7 position of guanine in position 527 of 16S rRNA. The polypeptide is Ribosomal RNA small subunit methyltransferase G (Brucella ovis (strain ATCC 25840 / 63/290 / NCTC 10512)).